Consider the following 464-residue polypeptide: Protein VAPYRIN-LIKE (464 aa).

Residues 3 to 124 (RLVKTEFNEV…RDAVITVILV (122 aa)) enclose the MSP domain. ANK repeat units lie at residues 153–182 (NLTN…DVNF), 186–215 (NGKS…RIND), 217–246 (VDFV…ELDV), 252–281 (EMMT…NANA), 285–314 (RRWT…VKYA), 318–347 (NGKT…LLQA), 349–368 (RVDD…EVNR), 372–401 (NGWT…EVDS), and 405–435 (AGYT…QTNL).

Expressed in roots.

It is found in the cytoplasm. The protein localises to the nucleus. The protein resides in the cell membrane. Functionally, may be involved in arbuscular mycorrhizal (AM) symbiosis with AM fungi and in nitrogen-fixing rhizobial bacteria symbiosis leading to the formation of root nodules. The sequence is that of Protein VAPYRIN-LIKE from Medicago truncatula (Barrel medic).